Here is a 342-residue protein sequence, read N- to C-terminus: Methionine import ATP-binding protein MetN (342 aa).

Residues 2–241 form the ABC transporter domain; sequence ITLEQVTKIY…PQQPITKRFV (240 aa). Position 38 to 45 (38 to 45) interacts with ATP; the sequence is GYSGAGKS.

The protein belongs to the ABC transporter superfamily. Methionine importer (TC 3.A.1.24) family. In terms of assembly, the complex is composed of two ATP-binding proteins (MetN), two transmembrane proteins (MetI) and a solute-binding protein (MetQ).

Its subcellular location is the cell membrane. The catalysed reaction is L-methionine(out) + ATP + H2O = L-methionine(in) + ADP + phosphate + H(+). It carries out the reaction D-methionine(out) + ATP + H2O = D-methionine(in) + ADP + phosphate + H(+). In terms of biological role, part of the ABC transporter complex MetNIQ involved in methionine import. Responsible for energy coupling to the transport system. The polypeptide is Methionine import ATP-binding protein MetN (Geobacillus kaustophilus (strain HTA426)).